We begin with the raw amino-acid sequence, 337 residues long: uncharacterized protein (337 aa).

Over residues 42-66 (SHSVSPSPSPSDFSSSSSSSSSSPS) the composition is skewed to low complexity. The segment at 42-68 (SHSVSPSPSPSDFSSSSSSSSSSPSTF) is disordered. An Exonuclease domain is found at 129 to 304 (FLVIDLEGKV…DDTKNITRVV (176 aa)). Positions 133, 135, and 234 each coordinate Mg(2+). Glutamate 135 (proton acceptor) is an active-site residue. AMP is bound at residue glutamate 135. The active-site Proton acceptor is histidine 291. Residue histidine 291 participates in AMP binding. Aspartate 296 is a Mg(2+) binding site.

This is an uncharacterized protein from Arabidopsis thaliana (Mouse-ear cress).